A 391-amino-acid chain; its full sequence is Multidrug resistance protein MdtL (391 aa).

The next 12 membrane-spanning stretches (helical) occupy residues 4-24 (FLICSFALVLLYPAGIDMYLV), 42-62 (IAFSVYLAGMAAAMLFAGKVA), 69-89 (PVAIPGAALFIIASVFCSLAE), 93-113 (LFLAGRFLQGLGAGCCYVVAF), 131-151 (LLNGITCIIPVLAPVLGHLIM), 158-178 (SLFWTMATMGIAVLMLSLFIL), 203-222 (FFLSRVVITTLSVSVILTFV), 245-265 (ALTAGVSMTVSFSTPFALGIF), 269-289 (TLMITSQVLFLAAGITLAVSP), 293-313 (VSLFGITLICAGFSVGFGVAM), 331-351 (LGIAQVCGSSLWIWLAAVVGI), and 356-376 (MLIGILIACSIVSLLLIMFVA).

The protein belongs to the major facilitator superfamily. DHA1 family. MdtL (TC 2.A.1.2.22) subfamily.

It localises to the cell inner membrane. In terms of biological role, confers resistance to chloramphenicol. The polypeptide is Multidrug resistance protein MdtL (Escherichia coli O127:H6 (strain E2348/69 / EPEC)).